The sequence spans 73 residues: Putative membrane protein insertion efficiency factor (73 aa).

Belongs to the UPF0161 family.

Its subcellular location is the cell inner membrane. Could be involved in insertion of integral membrane proteins into the membrane. This Rickettsia bellii (strain RML369-C) protein is Putative membrane protein insertion efficiency factor.